The chain runs to 528 residues: MNYGVEKLKLKYSKHGCITCKIRKKRCSEDKPVCRDCRRLSFPCIYISESVDKQSLKKIKADIQHQLISKKRKHAPDSAQKAAVATRTRRVGSDEQDNQVYLSKPLEDCISQKLDSMGLQLYNYYRSHLANIISIAPMNQNYYLNIFLPMAHENDGILFAILAWSANHLSISSSNELRKDEIFVNLANKYTYMSLSHLKTNEGSSACAKLGFLYSLAQILILCGSEICQGDVKFWKILLNIGKNLIENHVGKDVSRILTTTTEEPSLEERIIFPNFNSVVKYWLIVNFIYHDILNFNTTSFPIEQYEKFFQRDQNSLPSSANFIESIDSPIEEIDPLIGINKPILLLLGQVTNLTRFLQTMEQEEMLEHGDKILSLQVEIYKLQPSLMALEHLDDEKKFYYLELFEIMKISTLMFFQLTLLKIDKDSLELQILRNKLDSKLDKVIGTFLEGSLCFPLFIYGVCIQVEDMEKKIDLEAKFDDILKRYKCYNFQNARLLIRKIWQNEADGISEHDLVHMIDELDYNINFA.

The segment at residues 17–44 (CITCKIRKKRCSEDKPVCRDCRRLSFPC) is a DNA-binding region (zn(2)-C6 fungal-type). The Nuclear localization signal motif lies at 55–62 (SLKKIKAD).

In terms of assembly, UGA3 proteins associate in oligomers, at least in the presence of inducer.

It is found in the nucleus. GABA-dependent positive regulation of genes required for catabolism of GABA (UGA4, UGA1, and UGA2). In Saccharomyces cerevisiae (strain ATCC 204508 / S288c) (Baker's yeast), this protein is Transcriptional activator protein UGA3 (UGA3).